The primary structure comprises 219 residues: tRNA (guanine-N(7)-)-methyltransferase (219 aa).

Positions 51, 76, 103, and 125 each coordinate S-adenosyl-L-methionine. The active site involves D125. Residues K129, D161, and 199–202 (TRYE) each bind substrate.

Belongs to the class I-like SAM-binding methyltransferase superfamily. TrmB family.

It catalyses the reaction guanosine(46) in tRNA + S-adenosyl-L-methionine = N(7)-methylguanosine(46) in tRNA + S-adenosyl-L-homocysteine. The protein operates within tRNA modification; N(7)-methylguanine-tRNA biosynthesis. In terms of biological role, catalyzes the formation of N(7)-methylguanine at position 46 (m7G46) in tRNA. The chain is tRNA (guanine-N(7)-)-methyltransferase from Hyphomonas neptunium (strain ATCC 15444).